We begin with the raw amino-acid sequence, 226 residues long: Fibrillarin-like rRNA/tRNA 2'-O-methyltransferase (226 aa).

Residues 85–86 (TT), 104–105 (EF), 129–130 (DA), and 149–152 (DVAQ) each bind S-adenosyl-L-methionine.

The protein belongs to the methyltransferase superfamily. Fibrillarin family. Interacts with nop5. Component of box C/D small ribonucleoprotein (sRNP) particles that contain rpl7ae, FlpA and nop5, plus a guide RNA.

Involved in pre-rRNA and tRNA processing. Utilizes the methyl donor S-adenosyl-L-methionine to catalyze the site-specific 2'-hydroxyl methylation of ribose moieties in rRNA and tRNA. Site specificity is provided by a guide RNA that base pairs with the substrate. Methylation occurs at a characteristic distance from the sequence involved in base pairing with the guide RNA. This Thermococcus onnurineus (strain NA1) protein is Fibrillarin-like rRNA/tRNA 2'-O-methyltransferase.